Here is a 139-residue protein sequence, read N- to C-terminus: Small ribosomal subunit protein uS11A (139 aa).

Residues 119 to 139 form a disordered region; it reads DVTPIPTDSTRRKGGRRGRRL. Residues 130–139 are compositionally biased toward basic residues; the sequence is RKGGRRGRRL.

It belongs to the universal ribosomal protein uS11 family. In terms of assembly, component of the small ribosomal subunit (SSU). Mature yeast ribosomes consist of a small (40S) and a large (60S) subunit. The 40S small subunit contains 1 molecule of ribosomal RNA (18S rRNA) and at least 33 different proteins. The large 60S subunit contains 3 rRNA molecules (25S, 5.8S and 5S rRNA) and at least 46 different proteins. uS11 interacts with eS1 forming part of the mRNA exit tunnel. uS11 interacts with snoRNA U3. uS11 interacts with MPP10. Component of the ribosomal small subunit (SSU) processome composed of at least 40 protein subunits and snoRNA U3.

The protein localises to the cytoplasm. The protein resides in the nucleus. It is found in the nucleolus. Component of the ribosome, a large ribonucleoprotein complex responsible for the synthesis of proteins in the cell. The small ribosomal subunit (SSU) binds messenger RNAs (mRNAs) and translates the encoded message by selecting cognate aminoacyl-transfer RNA (tRNA) molecules. The large subunit (LSU) contains the ribosomal catalytic site termed the peptidyl transferase center (PTC), which catalyzes the formation of peptide bonds, thereby polymerizing the amino acids delivered by tRNAs into a polypeptide chain. The nascent polypeptides leave the ribosome through a tunnel in the LSU and interact with protein factors that function in enzymatic processing, targeting, and the membrane insertion of nascent chains at the exit of the ribosomal tunnel. uS11 is involved in nucleolar processing of pre-18S ribosomal RNA and ribosome assembly. The sequence is that of Small ribosomal subunit protein uS11A (rps1401) from Schizosaccharomyces pombe (strain 972 / ATCC 24843) (Fission yeast).